The following is a 600-amino-acid chain: MEHVTEGAWESLQVPLHPRVLGALRELGFPHMTPVQSATIPLFMKNKDVAAEAVTGSGKTLAFVIPILEILLRREEKLKKNQVGAIVITPTRELAIQIDEVLSHFTKHFPQFSQILWIGGRNPGEDVERFKQHGGNIIVATPGRLEDMFRRKAEGLDLASCVKSLDVLVLDEADRLLDMGFEASINTILEFLPKQRRTGLFSATQTQEVENLVRAGLRNPVRISVKEKGVAASSTQKTPSRLENHYMICKADEKFNQLVHFLRSRQQEKHLVFFSTCACVEYYGKALEALLKKVKILCIHGKMKYKRNKIFMEFRKLQSGILVCTDVMARGIDIPEVNWVLQYDPPSNASAFVHRCGRTARIGHGGSALVFLLPMEEAYINFLAINQKCPLQEMSLQRNTIDLLPKLRAMALADRAVFEKGMKAFVSFVQAYAKHECSLIFRLKDLDFAGLARGFALLRMPRMPELRGKQFPDFVPVDIDTDTIPFKDKIREKQRQKLLEQKRKERSENEGRKKFIKNKAWSKQKAKKERKKKMNAKRKKDEGSDIDDEDMEELLNDTRLLKKFKKGKITEEEFEKGLLTSAKRTVQLTDLGVSDLEEDS.

The Q motif motif lies at 9–37 (WESLQVPLHPRVLGALRELGFPHMTPVQS). In terms of domain architecture, Helicase ATP-binding spans 40–223 (IPLFMKNKDV…RAGLRNPVRI (184 aa)). 53 to 60 (AVTGSGKT) lines the ATP pocket. The DEAD box motif lies at 171 to 174 (DEAD). The region spanning 254–402 (KFNQLVHFLR…EMSLQRNTID (149 aa)) is the Helicase C-terminal domain. Basic and acidic residues predominate over residues 499 to 513 (LEQKRKERSENEGRK). The tract at residues 499-551 (LEQKRKERSENEGRKKFIKNKAWSKQKAKKERKKKMNAKRKKDEGSDIDDEDM) is disordered. Residues 514 to 538 (KFIKNKAWSKQKAKKERKKKMNAKR) show a composition bias toward basic residues. An important for nuclear localization region spans residues 533–562 (KMNAKRKKDEGSDIDDEDMEELLNDTRLLK). A phosphoserine mark is found at Ser-544 and Ser-594.

Belongs to the DEAD box helicase family. DDX55/SPB4 subfamily. Interacts with 28S rRNA. Interacts with double-stranded RNA substrates in vitro; the interaction stimulates ATPase activity.

The protein resides in the nucleus. Its subcellular location is the nucleoplasm. The enzyme catalyses ATP + H2O = ADP + phosphate + H(+). In terms of biological role, probable ATP-binding RNA helicase. Has ATPase activity and is involved in the maturation of precursor large subunit rRNAs. This chain is ATP-dependent RNA helicase DDX55 (Ddx55), found in Mus musculus (Mouse).